The primary structure comprises 200 residues: Small ribosomal subunit protein uS4 (200 aa).

Positions 22–42 are disordered; it reads TGKELEKRPYAPGPHGPGQRK. The S4 RNA-binding domain occupies 92–155; it reads TRLDNLVYRL…QNLAVVKESV (64 aa).

This sequence belongs to the universal ribosomal protein uS4 family. As to quaternary structure, part of the 30S ribosomal subunit. Contacts protein S5. The interaction surface between S4 and S5 is involved in control of translational fidelity.

One of the primary rRNA binding proteins, it binds directly to 16S rRNA where it nucleates assembly of the body of the 30S subunit. In terms of biological role, with S5 and S12 plays an important role in translational accuracy. The protein is Small ribosomal subunit protein uS4 of Bacillus pumilus (strain SAFR-032).